Consider the following 364-residue polypeptide: Protein Bop (364 aa).

Residues 66-88 are disordered; sequence STASGTCGGKPAERGPLAGHMPS. The BH3 signature appears at 114–128; that stretch reads LDRFLAQLGDYMSFH. A disordered region spans residues 258-364; the sequence is QLTKESTPGP…PGEPPLSPGF (107 aa). Composition is skewed to pro residues over residues 311–322 and 355–364; these read AQRPDPAHPGGP and PGEPPLSPGF.

In terms of assembly, interacts (via BH3 domain) with VDAC1. Interacts with pro-survival Bcl-2 family members, BCL2, BCL2L1 isoform Bcl-X(L), MCL1, BCL2A1 and BCL2L2. Interacts with BAX and BAK1. Ubiquitously expressed.

It localises to the mitochondrion. Functionally, could induce apoptosis in a BH3 domain-dependent manner. The direct interaction network of Bcl-2 family members may play a key role in modulation RTL10/BOP intrinsic apoptotic signaling activity. The protein is Protein Bop of Homo sapiens (Human).